A 166-amino-acid polypeptide reads, in one-letter code: Phosphopantetheine adenylyltransferase (166 aa).

Threonine 9 provides a ligand contact to substrate. Residues 9 to 10 (TF) and histidine 17 contribute to the ATP site. Lysine 41, leucine 78, and arginine 92 together coordinate substrate. ATP is bound by residues 93 to 95 (GLR), glutamate 103, and 128 to 134 (HQAIASK).

It belongs to the bacterial CoaD family. Homohexamer. The cofactor is Mg(2+).

The protein localises to the cytoplasm. The enzyme catalyses (R)-4'-phosphopantetheine + ATP + H(+) = 3'-dephospho-CoA + diphosphate. It functions in the pathway cofactor biosynthesis; coenzyme A biosynthesis; CoA from (R)-pantothenate: step 4/5. Reversibly transfers an adenylyl group from ATP to 4'-phosphopantetheine, yielding dephospho-CoA (dPCoA) and pyrophosphate. The chain is Phosphopantetheine adenylyltransferase from Roseobacter denitrificans (strain ATCC 33942 / OCh 114) (Erythrobacter sp. (strain OCh 114)).